We begin with the raw amino-acid sequence, 1226 residues long: Probable DNA-binding protein SNT1 (1226 aa).

2 disordered regions span residues 1–219 (MGYP…YSRS) and 264–331 (LKST…PDNI). Over residues 11-27 (GDKKRYHYSNNPNRRHP) the composition is skewed to basic residues. The span at 31 to 64 (YSKNSFPKSSNNGFVSSPTADNSTNPSVTPSTAS) shows a compositional bias: polar residues. Composition is skewed to low complexity over residues 81–103 (PRPS…SSTR) and 116–131 (SSST…NTST). Composition is skewed to polar residues over residues 132–143 (ITHTNTDIGNSR) and 150–170 (SRYN…SALS). Position 187 is a phosphoserine (Ser-187). Low complexity predominate over residues 202–211 (NNVSSVNNNS). The span at 264–275 (LKSTHSQSSPSL) shows a compositional bias: polar residues. Residues 280 to 304 (FHDANKLDKPEASVKVETPSKDETK) are compositionally biased toward basic and acidic residues. Residue Ser-395 is modified to Phosphoserine. The stretch at 539–591 (DLQKKYEKECEILTKLSENLRKEEIENKRKEHELMEQKRREEGIETEKEKSLR) forms a coiled coil. Basic and acidic residues predominate over residues 569-590 (EHELMEQKRREEGIETEKEKSL). The disordered stretch occupies residues 569-605 (EHELMEQKRREEGIETEKEKSLRHPSSSSSSRRRNRA). One can recognise an SANT domain in the interval 668–720 (DASDNFTDHEHSLFLEGYLIHPKKFGKISHYMGGLRSPEECVLHYYRTKKTVN). Basic residues predominate over residues 732 to 745 (RKMSAAAKRRKRKE). Positions 732–796 (RKMSAAAKRR…SEVKGDPLGT (65 aa)) are disordered. Acidic residues predominate over residues 748 to 758 (NDEEVEVDESK). Basic and acidic residues predominate over residues 759–773 (EESTNTIEKEEKSEN). Thr-796 carries the phosphothreonine modification. The HTH myb-type domain maps to 884–938 (APEHKTSYWSVRESQLFPELLKEFGSQWSLISEKLGTKSTTMVRNYYQRNAARNG). Positions 911-934 (WSLISEKLGTKSTTMVRNYYQRNA) form a DNA-binding region, H-T-H motif. The residue at position 1037 (Ser-1037) is a Phosphoserine. Residues 1172–1194 (SQGTPTFPLPAPRTSPISRAPPK) form a disordered region.

In terms of assembly, identified in a Set3C complex with SET3, HST1, HOS2, SIF2, CPR1 and HOS4.

The protein resides in the nucleus. Its function is as follows. Part of the Set3C complex, which is required to repress early/middle sporulation genes during meiosis. The chain is Probable DNA-binding protein SNT1 (SNT1) from Saccharomyces cerevisiae (strain ATCC 204508 / S288c) (Baker's yeast).